The primary structure comprises 497 residues: SPI-2 type 3 secretion system secretin (497 aa).

The signal sequence occupies residues 1 to 20 (MVVNKRLILILLFILNTAKS).

This sequence belongs to the bacterial secretin family. T3SS SctC subfamily. In terms of assembly, the core secretion machinery of the T3SS is composed of approximately 20 different proteins, including cytoplasmic components, a base, an export apparatus and a needle. This subunit is part of the base, which anchors the injectisome in the bacterial cell envelope. Forms a stable homooligomeric complex.

It localises to the cell outer membrane. In terms of biological role, component of the type III secretion system (T3SS), also called injectisome, which is used to inject bacterial effector proteins into eukaryotic host cells. Forms a ring-shaped multimeric structure with an apparent central pore in the outer membrane. Required for secretion of some type III-secreted effectors including the SpvB exotoxin. This Salmonella typhimurium (strain 14028s / SGSC 2262) protein is SPI-2 type 3 secretion system secretin.